The chain runs to 250 residues: MTVDPIHQFEIKRYVDLLNFGGVQFSFTNAALFMFGIVAIIFFFLTFATRGRTLVPGRAQSAAEMSYEFIAKMVRDSAGSEGMVFFPLVFSLFTFVLVSNVVGLIPYTFTVTAHLIVTAAMALLVIGTVIVYGFVRHGTHFLHLFVPSGVPAFLLPFLVVIEVVSFLSRPISLSLRLFANMLAGHIALKVFAFFVVGLASAGVVGWFGATLPFFMIVALYALELLVAMLQAYVFAVLTSIYLNDAIHPGH.

The next 6 membrane-spanning stretches (helical) occupy residues 27 to 47, 85 to 105, 115 to 135, 141 to 161, 181 to 201, and 223 to 243; these read FTNA…FLTF, FFPL…VGLI, LIVT…YGFV, FLHL…LVVI, MLAG…LASA, and ELLV…IYLN.

Belongs to the ATPase A chain family. As to quaternary structure, F-type ATPases have 2 components, CF(1) - the catalytic core - and CF(0) - the membrane proton channel. CF(1) has five subunits: alpha(3), beta(3), gamma(1), delta(1), epsilon(1). CF(0) has three main subunits: a(1), b(2) and c(9-12). The alpha and beta chains form an alternating ring which encloses part of the gamma chain. CF(1) is attached to CF(0) by a central stalk formed by the gamma and epsilon chains, while a peripheral stalk is formed by the delta and b chains.

It is found in the cell inner membrane. Its function is as follows. Key component of the proton channel; it plays a direct role in the translocation of protons across the membrane. This Xanthobacter autotrophicus (strain ATCC BAA-1158 / Py2) protein is ATP synthase subunit a.